Reading from the N-terminus, the 145-residue chain is Neuromedin-S (145 aa).

Residues 1–25 (MKYLAQFPSILAIYCFCLLQIPSSG) form the signal peptide. 3 propeptides span residues 26-64 (FPRP…IYKR), 65-100 (FLFH…ADRR), and 101-103 (MKT). N136 bears the Asparagine amide mark. Residues 139 to 145 (NLDFDTW) constitute a propeptide that is removed on maturation.

The protein belongs to the NmU family.

It is found in the secreted. In terms of biological role, implicated in the regulation of circadian rhythms through autocrine and/or paracrine actions. This is Neuromedin-S (NMS) from Bos taurus (Bovine).